The chain runs to 62 residues: Lepidopteran-selective toxin (62 aa).

The N-terminal stretch at 1–24 (MKFLYGVILIALFLTVMTATLSEA) is a signal peptide. 4 cysteine pairs are disulfide-bonded: cysteine 26–cysteine 43, cysteine 29–cysteine 51, cysteine 40–cysteine 56, and cysteine 44–cysteine 58. Tyrosine 62 is a propeptide.

It belongs to the short scorpion toxin superfamily. Chloride channel inhibitor family. Expressed by the venom gland.

The protein localises to the secreted. In terms of biological role, toxin with unknown function in healthy organisms. On glioma cells, interacts with chloride channels (probably ClC-3/CLCN3) and MMP2 at the surface of glioma cells. This complex is then internalized via caveolae, thus inhibiting the chloride channels necessary for cell shrinkage and tumor propagation. Induces flaccid paralysis in H.virescens larvae. Is not toxic to S.falculata larvae or mice. The protein is Lepidopteran-selective toxin of Hottentotta tamulus (Eastern Indian scorpion).